The primary structure comprises 30 residues: Thrombin-like enzyme LmrSP-2 (30 aa).

Belongs to the peptidase S1 family. Snake venom subfamily. Expressed by the venom gland.

The protein localises to the secreted. Functionally, thrombin-like snake venom serine protease that cleaves alpha-chain of fibrinogen (FGA) releases only fibrinopeptide A. Shows coagulant, esterase and amidase activities. The sequence is that of Thrombin-like enzyme LmrSP-2 from Lachesis muta rhombeata (Bushmaster).